Consider the following 107-residue polypeptide: Guanylin (107 aa).

The signal sequence occupies residues 1 to 20 (MNTFLLSALCLGAWAALVGA). A propeptide spanning residues 21–92 (VTVQDGDFSF…LNRLAVIAQD (72 aa)) is cleaved from the precursor. Intrachain disulfides connect Cys61–Cys74, Cys96–Cys104, and Cys99–Cys107.

The protein belongs to the guanylin family.

The protein localises to the secreted. In terms of biological role, endogenous activator of intestinal guanylate cyclase. It stimulates this enzyme through the same receptor binding region as the heat-stable enterotoxins. This chain is Guanylin (GUCA2A), found in Cavia porcellus (Guinea pig).